A 1079-amino-acid polypeptide reads, in one-letter code: Spermatogenesis-associated protein 31G1 (1079 aa).

Disordered regions lie at residues 97-145, 261-281, 297-317, 331-362, 376-412, 506-566, 637-678, and 840-975; these read EVEE…GSEG, EDLE…SPSV, GVLS…LEVL, KMPQ…EGGL, EKPQ…RYKP, NLWA…SPPP, VPVF…EQRK, and PHSS…NHPA. A compositionally biased stretch (acidic residues) spans 98–113; the sequence is VEEEGEEEEEGEDEAS. Residues 336–345 show a composition bias toward pro residues; that stretch reads FEPPMPPPCQ. A compositionally biased stretch (basic and acidic residues) spans 398–412; that stretch reads LQRESSLEDPSRYKP. Composition is skewed to low complexity over residues 551 to 562 and 645 to 655; these read NSSASRSPSLAL and SSPSSNSVSKS. The span at 669-678 shows a compositional bias: basic and acidic residues; the sequence is PDGEAVEQRK. Residues 942 to 951 are compositionally biased toward basic residues; the sequence is AKKREHPRKP.

Its function is as follows. Dispensable for normal development and fertility. This is Spermatogenesis-associated protein 31G1 from Homo sapiens (Human).